The following is a 22-amino-acid chain: Melittin-related peptide FQ-22-1 (22 aa).

Q22 is modified (glutamine amide).

In terms of tissue distribution, expressed by the skin glands.

Its subcellular location is the secreted. The sequence is that of Melittin-related peptide FQ-22-1 from Rana arvalis (Moor frog).